We begin with the raw amino-acid sequence, 219 residues long: MHLRSKPWASDWLAEHSDIVIDQDRATAQIGQWQSLFDQEQPIHLEIGSGKGQFILGMALAHPEINYIGMEIQETAIAIAARKSFDQVGTLPNLRYIYGNGNGVETYFEKGEVSKVYLNFSDPWPKKRHESRRLTYKSFLKSYEAVLPEHGEVEFKTDNRHLFEYSMVSFMDYGMRWTPEDYTLDLHADEDKVQGNVETEYEQKFMAKGQPIYKIKAHF.

E46, E71, N100, and D122 together coordinate S-adenosyl-L-methionine. The active site involves D122. Substrate-binding positions include K126, D158, and 199–202 (TEYE).

The protein belongs to the class I-like SAM-binding methyltransferase superfamily. TrmB family.

The enzyme catalyses guanosine(46) in tRNA + S-adenosyl-L-methionine = N(7)-methylguanosine(46) in tRNA + S-adenosyl-L-homocysteine. Its pathway is tRNA modification; N(7)-methylguanine-tRNA biosynthesis. Its function is as follows. Catalyzes the formation of N(7)-methylguanine at position 46 (m7G46) in tRNA. The sequence is that of tRNA (guanine-N(7)-)-methyltransferase from Leuconostoc mesenteroides subsp. mesenteroides (strain ATCC 8293 / DSM 20343 / BCRC 11652 / CCM 1803 / JCM 6124 / NCDO 523 / NBRC 100496 / NCIMB 8023 / NCTC 12954 / NRRL B-1118 / 37Y).